Here is a 76-residue protein sequence, read N- to C-terminus: Bowman-Birk type proteinase inhibitor DE-4 (76 aa).

Cystine bridges form between C15–C69, C16–C31, C19–C65, C21–C29, C39–C46, C43–C58, and C48–C56.

It belongs to the Bowman-Birk serine protease inhibitor family.

The protein is Bowman-Birk type proteinase inhibitor DE-4 of Macrotyloma axillare (Perennial horse gram).